Here is a 376-residue protein sequence, read N- to C-terminus: Chaperone protein DnaJ (376 aa).

A J domain is found at 5–69 (DYYEILGVDR…EKRARYDRFG (65 aa)). Residues 135 to 217 (GLETDIRVPH…CNGKGVVRKT (83 aa)) form a CR-type zinc finger. Residues Cys-148, Cys-151, Cys-165, Cys-168, Cys-191, Cys-194, Cys-205, and Cys-208 each contribute to the Zn(2+) site. 4 CXXCXGXG motif repeats span residues 148–155 (CPVCHGSR), 165–172 (CQTCGGSG), 191–198 (CPDCQGEG), and 205–212 (CSNCNGKG).

The protein belongs to the DnaJ family. Homodimer. Zn(2+) serves as cofactor.

The protein localises to the cytoplasm. Functionally, participates actively in the response to hyperosmotic and heat shock by preventing the aggregation of stress-denatured proteins and by disaggregating proteins, also in an autonomous, DnaK-independent fashion. Unfolded proteins bind initially to DnaJ; upon interaction with the DnaJ-bound protein, DnaK hydrolyzes its bound ATP, resulting in the formation of a stable complex. GrpE releases ADP from DnaK; ATP binding to DnaK triggers the release of the substrate protein, thus completing the reaction cycle. Several rounds of ATP-dependent interactions between DnaJ, DnaK and GrpE are required for fully efficient folding. Also involved, together with DnaK and GrpE, in the DNA replication of plasmids through activation of initiation proteins. In Methanothermobacter thermautotrophicus (strain ATCC 29096 / DSM 1053 / JCM 10044 / NBRC 100330 / Delta H) (Methanobacterium thermoautotrophicum), this protein is Chaperone protein DnaJ.